Reading from the N-terminus, the 253-residue chain is Zinc import ATP-binding protein ZnuC (253 aa).

The ABC transporter domain maps to 6-227 (VTLNKISVTF…FGNRGAEQLA (222 aa)). An ATP-binding site is contributed by 38-45 (GPNGAGKS).

Belongs to the ABC transporter superfamily. Zinc importer (TC 3.A.1.15.5) family. In terms of assembly, the complex is composed of two ATP-binding proteins (ZnuC), two transmembrane proteins (ZnuB) and a solute-binding protein (ZnuA).

The protein localises to the cell inner membrane. The enzyme catalyses Zn(2+)(out) + ATP(in) + H2O(in) = Zn(2+)(in) + ADP(in) + phosphate(in) + H(+)(in). Functionally, part of the ABC transporter complex ZnuABC involved in zinc import. Responsible for energy coupling to the transport system. This Yersinia pseudotuberculosis serotype I (strain IP32953) protein is Zinc import ATP-binding protein ZnuC.